The chain runs to 106 residues: Large ribosomal subunit protein uL24 (106 aa).

This sequence belongs to the universal ribosomal protein uL24 family. In terms of assembly, part of the 50S ribosomal subunit.

Its function is as follows. One of two assembly initiator proteins, it binds directly to the 5'-end of the 23S rRNA, where it nucleates assembly of the 50S subunit. In terms of biological role, one of the proteins that surrounds the polypeptide exit tunnel on the outside of the subunit. The chain is Large ribosomal subunit protein uL24 from Bordetella petrii (strain ATCC BAA-461 / DSM 12804 / CCUG 43448).